Reading from the N-terminus, the 1270-residue chain is Microtubule-associated tumor suppressor 1 (1270 aa).

Positions 1–14 (MTDDNSDDKIEDEL) are enriched in acidic residues. Disordered regions lie at residues 1–50 (MTDD…NSAN) and 184–236 (FHTA…VTPS). Positions 38 to 50 (NSSASSVNWNSAN) are enriched in low complexity. Threonine 186 carries the phosphothreonine modification. A compositionally biased stretch (low complexity) spans 197-211 (SGSTSSLSYSTWTSS). Positions 212–228 (HSDKTHARETTYDRESF) are enriched in basic and acidic residues. 3 positions are modified to phosphoserine: serine 381, serine 399, and serine 443. 2 disordered regions span residues 524-560 (DAAL…PRSD) and 592-622 (THSK…SSSN). The span at 533 to 556 (RPQQTSASSPSSVNSRQQTVLSRT) shows a compositional bias: polar residues. Position 629 is a phosphoserine (serine 629). Composition is skewed to polar residues over residues 701–710 (SKTTTTSGRN), 759–776 (VSSS…SSWV), and 797–815 (TGST…TYSN). Positions 701–815 (SKTTTTSGRN…THSELSTYSN (115 aa)) are disordered. A coiled-coil region spans residues 940–1231 (IQHLLSEREE…RLSMENEELL (292 aa)). Residues serine 1203, serine 1224, serine 1245, serine 1255, serine 1259, serine 1261, serine 1264, and serine 1268 each carry the phosphoserine modification. The tract at residues 1237 to 1270 (GDLCSPKRSPTSSAIPLQSPRNSGSFPSPSISPR) is disordered. Residues 1244–1270 (RSPTSSAIPLQSPRNSGSFPSPSISPR) show a composition bias toward polar residues.

This sequence belongs to the MTUS1 family. As to quaternary structure, homodimer. Interacts with AGTR2. Interacts with PTPN6. Isoform 1 associates with microtubules. Ubiquitously expressed (at protein level). Highly expressed in brain. Down-regulated in ovarian carcinoma, pancreas carcinoma, colon carcinoma and head and neck squamous cell carcinoma (HNSCC). Isoform 1 is the major isoform in most peripheral tissues. Isoform 2 is abundant in most peripheral tissues. Isoform 3 is the major isoform in brain, female reproductive tissues, thyroid and heart. Within brain it is highly expressed in corpus callosum and pons. Isoform 6 is brain-specific, it is the major isoform in cerebellum and fetal brain.

It is found in the mitochondrion. Its subcellular location is the golgi apparatus. The protein resides in the cell membrane. The protein localises to the nucleus. It localises to the cytoplasm. It is found in the cytoskeleton. Its subcellular location is the microtubule organizing center. The protein resides in the centrosome. The protein localises to the spindle. In terms of biological role, cooperates with AGTR2 to inhibit ERK2 activation and cell proliferation. May be required for AGTR2 cell surface expression. Together with PTPN6, induces UBE2V2 expression upon angiotensin-II stimulation. Isoform 1 inhibits breast cancer cell proliferation, delays the progression of mitosis by prolonging metaphase and reduces tumor growth. The sequence is that of Microtubule-associated tumor suppressor 1 (MTUS1) from Homo sapiens (Human).